The primary structure comprises 368 residues: Histidinol-phosphate aminotransferase (368 aa).

Position 229 is an N6-(pyridoxal phosphate)lysine (K229).

This sequence belongs to the class-II pyridoxal-phosphate-dependent aminotransferase family. Histidinol-phosphate aminotransferase subfamily. In terms of assembly, homodimer. Pyridoxal 5'-phosphate serves as cofactor.

It carries out the reaction L-histidinol phosphate + 2-oxoglutarate = 3-(imidazol-4-yl)-2-oxopropyl phosphate + L-glutamate. The protein operates within amino-acid biosynthesis; L-histidine biosynthesis; L-histidine from 5-phospho-alpha-D-ribose 1-diphosphate: step 7/9. The sequence is that of Histidinol-phosphate aminotransferase from Acidovorax ebreus (strain TPSY) (Diaphorobacter sp. (strain TPSY)).